The following is a 94-amino-acid chain: Cell division protein FtsB (94 aa).

Over 1-3 (MRW) the chain is Cytoplasmic. Residues 4 to 21 (LTVGLLAAIGLLQYPLWV) form a helical membrane-spanning segment. Over 22–94 (GKGGWLKVWE…VQIPEKVPGK (73 aa)) the chain is Periplasmic. A coiled-coil region spans residues 31-73 (EYDRQLQQQKEVTRKLEIRNAGLDAEVRDLKQGYDAIEERARF).

This sequence belongs to the FtsB family. In terms of assembly, part of a complex composed of FtsB, FtsL and FtsQ.

The protein localises to the cell inner membrane. Functionally, essential cell division protein. May link together the upstream cell division proteins, which are predominantly cytoplasmic, with the downstream cell division proteins, which are predominantly periplasmic. The polypeptide is Cell division protein FtsB (Dechloromonas aromatica (strain RCB)).